Here is a 205-residue protein sequence, read N- to C-terminus: Lymphotoxin-alpha (205 aa).

A signal peptide spans 1-34; sequence MTPPERLFLPRVCGTTLHLLLLGLLLVLLPGAQG. Thr41 carries O-linked (GalNAc...) threonine; partial glycosylation. The THD domain maps to 63–205; the sequence is PAAHLIGDPS…STVFFGAFAL (143 aa). Asn96 is a glycosylation site (N-linked (GlcNAc...) asparagine).

Belongs to the tumor necrosis factor family. Homotrimer, and heterotrimer of either two LTB and one LTA subunits or (less prevalent) two LTA and one LTB subunits. Interacts with TNFRSF14.

The protein resides in the secreted. The protein localises to the membrane. Functionally, cytokine that in its homotrimeric form binds to TNFRSF1A/TNFR1, TNFRSF1B/TNFBR and TNFRSF14/HVEM. In its heterotrimeric form with LTB binds to TNFRSF3/LTBR. Lymphotoxin is produced by lymphocytes and is cytotoxic for a wide range of tumor cells in vitro and in vivo. This chain is Lymphotoxin-alpha (LTA), found in Homo sapiens (Human).